We begin with the raw amino-acid sequence, 368 residues long: P2X receptor C (368 aa).

At 1–24 (MLDWDSILAYNTIKVVRIRDRRLG) the chain is on the cytoplasmic side. The helical transmembrane segment at 25–45 (ILHLIFMIAIISYVVIYSAII) threads the bilayer. The Lumenal portion of the chain corresponds to 46-368 (KKGYLSIEEP…DKLYHNIEAL (323 aa)). Residues 282 to 295 (RHAIRLIFIQTGVI) are pore-forming motif.

This sequence belongs to the P2X receptor family.

The protein resides in the contractile vacuole membrane. Functionally, P2X receptors are ligand-gated ion channels that play a role in intracellular calcium signaling. ATP does not evoke inward currents in p2xC. Not essential for osmoregulation. In Dictyostelium discoideum (Social amoeba), this protein is P2X receptor C (p2xC).